The sequence spans 161 residues: Bacterial E2-like ubiquitin protein BilB (161 aa).

C113 functions as the Glycyl thioester intermediate in the catalytic mechanism.

Its function is as follows. Component of the Bil (bacterial ISG15-like) antiviral defense system, composed of BilA, BilB, BilC and BilD. The Bil system specifically conjugates a ubiquitin-like moiety (bilA) to the bacteriophage central tail fiber (CTF, or tip attachment protein J) via reactions involving E1 (bilD) and E2 (bilB). Modifies CTF of phage SECphi27 and SECphi4, which probably interferes with assembly of the phage tail. Also modifies T5 baseplate hub protein pb3 (gene D16), but not gp27 of phage T6 (Bil defends against T6). BilB probably accepts ubiquitin from the BilA-BilD (E1) complex and catalyzes its covalent attachment to target protein (CTF). Bil-encoding bacteria produce mostly defective phage SECphi27, many of which have phage assembly defects, including no tails. SECphi27 phage progeny produced in E.coli with the Bil system inject less DNA into naive host cells, maybe because the phage are less able to adsorb and inject their DNA into host cells. In terms of biological role, expression of the Bil system in E.coli (strain MG1655) confers about 100-fold resistance to phage SECphi27, SECphi18, SECphi6, SECphi4 and T5, but not to SECphi17. When cells expressing the Bil system are infected by phage SECphi27 at low multiplicity of infection (0.03 MOI) the culture survives, at 3.0 MOI the culture collapses at the same time as cells without the Bil system. In Collimonas sp. (strain OK412), this protein is Bacterial E2-like ubiquitin protein BilB.